Consider the following 156-residue polypeptide: Small ribosomal subunit protein uS7 (156 aa).

This sequence belongs to the universal ribosomal protein uS7 family. In terms of assembly, part of the 30S ribosomal subunit. Contacts proteins S9 and S11.

One of the primary rRNA binding proteins, it binds directly to 16S rRNA where it nucleates assembly of the head domain of the 30S subunit. Is located at the subunit interface close to the decoding center, probably blocks exit of the E-site tRNA. This is Small ribosomal subunit protein uS7 from Neisseria gonorrhoeae (strain ATCC 700825 / FA 1090).